The sequence spans 94 residues: Aspartyl/glutamyl-tRNA(Asn/Gln) amidotransferase subunit C (94 aa).

Belongs to the GatC family. As to quaternary structure, heterotrimer of A, B and C subunits.

The enzyme catalyses L-glutamyl-tRNA(Gln) + L-glutamine + ATP + H2O = L-glutaminyl-tRNA(Gln) + L-glutamate + ADP + phosphate + H(+). It catalyses the reaction L-aspartyl-tRNA(Asn) + L-glutamine + ATP + H2O = L-asparaginyl-tRNA(Asn) + L-glutamate + ADP + phosphate + 2 H(+). Allows the formation of correctly charged Asn-tRNA(Asn) or Gln-tRNA(Gln) through the transamidation of misacylated Asp-tRNA(Asn) or Glu-tRNA(Gln) in organisms which lack either or both of asparaginyl-tRNA or glutaminyl-tRNA synthetases. The reaction takes place in the presence of glutamine and ATP through an activated phospho-Asp-tRNA(Asn) or phospho-Glu-tRNA(Gln). The protein is Aspartyl/glutamyl-tRNA(Asn/Gln) amidotransferase subunit C of Syntrophomonas wolfei subsp. wolfei (strain DSM 2245B / Goettingen).